Reading from the N-terminus, the 107-residue chain is N(4)-acetylcytidine amidohydrolase (107 aa).

The 97-residue stretch at 6-102 (TFYRRFQADI…RLYVISFSLV (97 aa)) folds into the ASCH domain. The active-site Proton acceptor is the lysine 20. The active-site Nucleophile is the threonine 23. Glutamate 73 serves as the catalytic Proton donor.

Belongs to the N(4)-acetylcytidine amidohydrolase family.

The catalysed reaction is N(4)-acetylcytidine + H2O = cytidine + acetate + H(+). It catalyses the reaction N(4)-acetyl-2'-deoxycytidine + H2O = 2'-deoxycytidine + acetate + H(+). It carries out the reaction N(4)-acetylcytosine + H2O = cytosine + acetate + H(+). Functionally, catalyzes the hydrolysis of N(4)-acetylcytidine (ac4C). The chain is N(4)-acetylcytidine amidohydrolase from Edwardsiella ictaluri (strain 93-146).